The primary structure comprises 294 residues: Ribosomal RNA small subunit methyltransferase A (294 aa).

S-adenosyl-L-methionine contacts are provided by Asn-31, Leu-33, Gly-58, Glu-79, Asp-111, and Asn-136.

The protein belongs to the class I-like SAM-binding methyltransferase superfamily. rRNA adenine N(6)-methyltransferase family. RsmA subfamily.

It is found in the cytoplasm. The catalysed reaction is adenosine(1518)/adenosine(1519) in 16S rRNA + 4 S-adenosyl-L-methionine = N(6)-dimethyladenosine(1518)/N(6)-dimethyladenosine(1519) in 16S rRNA + 4 S-adenosyl-L-homocysteine + 4 H(+). Its function is as follows. Specifically dimethylates two adjacent adenosines (A1518 and A1519) in the loop of a conserved hairpin near the 3'-end of 16S rRNA in the 30S particle. May play a critical role in biogenesis of 30S subunits. The polypeptide is Ribosomal RNA small subunit methyltransferase A (Lactobacillus helveticus (strain DPC 4571)).